A 237-amino-acid polypeptide reads, in one-letter code: Ribosomal RNA small subunit methyltransferase G (237 aa).

Residues Gly76, Phe81, 99–101, 128–129, and Arg147 contribute to the S-adenosyl-L-methionine site; these read DSS and IE.

This sequence belongs to the methyltransferase superfamily. RNA methyltransferase RsmG family.

Its subcellular location is the cytoplasm. Functionally, specifically methylates the N7 position of a guanine in 16S rRNA. This Prochlorococcus marinus (strain MIT 9312) protein is Ribosomal RNA small subunit methyltransferase G.